The following is a 389-amino-acid chain: Large envelope protein (389 aa).

The residue at position 1 (methionine 1) is an N-acetylmethionine. Glycine 2 carries the N-myristoyl glycine; by host lipid modification. The tract at residues 2-108 (GTNLSVPNPL…PPLRDTHPQA (107 aa)) is pre-S1. The interval 2–163 (GTNLSVPNPL…LSKTGDPVPN (162 aa)) is pre-S. The Virion surface; in external conformation segment spans residues 2-170 (GTNLSVPNPL…VPNMENIASG (169 aa)). The Intravirion; in internal conformation portion of the chain corresponds to 2–242 (GTNLSVPNPL…PGYRWMCLRR (241 aa)). The segment at 73 to 107 (ILTSVPAAPPPASTNRQSGRQPTPLSPPLRDTHPQ) is disordered. Polar residues predominate over residues 85–95 (STNRQSGRQPT). Positions 109–163 (MQWNSTTFHQTLQDPRVRALYFPAGGSSSGTVSPAQNTVSAISSILSKTGDPVPN) are pre-S2. A helical membrane pass occupies residues 171–191 (LLGPLLVLQAGFFLLTKILTI). The Intravirion; in external conformation segment spans residues 192–242 (PQSLDSWWTSLNFLGGTPVCLGQNSQSQISSHSPTCCPPICPGYRWMCLRR). Residues 243–263 (FIIFLCILLLCLIFLLVLLDY) traverse the membrane as a helical segment. The Virion surface segment spans residues 264–337 (QGMLPVCPLI…WASVRFSWLS (74 aa)). N-linked (GlcNAc...) asparagine; by host glycosylation is present at asparagine 309. A helical membrane pass occupies residues 338 to 358 (LLVPFVQWFVGLSPTVWLSVI). Residues 359-364 (WMMWYW) are Intravirion-facing. A helical membrane pass occupies residues 365–387 (GPSLYNILSPFMPLLPIFFCLWV). The Virion surface segment spans residues 388 to 389 (YI).

The protein belongs to the orthohepadnavirus major surface antigen family. As to quaternary structure, interacts (via its myristoylated pre-S1 region) with the host SLC10A1/NTCP; this interaction is essential for viral entry. In terms of assembly, in its internal form (Li-HBsAg), interacts with the capsid protein and with the isoform S. Interacts with host chaperone CANX. Associates with host chaperone CANX through its pre-S2 N glycan; this association may be essential for isoform M proper secretion. As to quaternary structure, interacts with isoform L. Interacts with the antigens of satellite virus HDV (HDVAgs); this interaction is required for encapsidation of HDV genomic RNA. Isoform M is N-terminally acetylated by host at a ratio of 90%, and N-glycosylated by host at the pre-S2 region. Post-translationally, myristoylated; this modification is essential for its interaction with the host protein SLC10A1/NTCP.

It is found in the virion membrane. Its function is as follows. The large envelope protein exists in two topological conformations, one which is termed 'external' or Le-HBsAg and the other 'internal' or Li-HBsAg. In its external conformation the protein attaches the virus to cell receptors and thereby initiating infection. This interaction determines the species specificity and liver tropism. This attachment induces virion internalization predominantly through caveolin-mediated endocytosis. The large envelope protein also assures fusion between virion membrane and endosomal membrane. In its internal conformation the protein plays a role in virion morphogenesis and mediates the contact with the nucleocapsid like a matrix protein. Functionally, the middle envelope protein plays an important role in the budding of the virion. It is involved in the induction of budding in a nucleocapsid independent way. In this process the majority of envelope proteins bud to form subviral lipoprotein particles of 22 nm of diameter that do not contain a nucleocapsid. The polypeptide is Large envelope protein (Hepatitis B virus genotype B1 subtype adw (isolate Japan/pJDW233/1988) (HBV-B)).